A 322-amino-acid polypeptide reads, in one-letter code: Sideroflexin-2 (322 aa).

M1 is modified (N-acetylmethionine). 5 helical membrane passes run 99 to 119 (GMLI…VIFW), 147 to 167 (ALSY…MNMW), 174 to 194 (LVGR…NIPM), 223 to 243 (VGIA…MILL), and 266 to 286 (LQVL…CGLF).

Belongs to the sideroflexin family. In terms of tissue distribution, expressed in brain, heart, kidney, spleen, thymus, liver, stomach and skin.

Its subcellular location is the mitochondrion inner membrane. It localises to the mitochondrion outer membrane. It carries out the reaction L-serine(in) = L-serine(out). Functionally, mitochondrial amino-acid transporter that mediates transport of serine into mitochondria. Involved in mitochondrial iron homeostasis by regulating heme biosynthesis. The protein is Sideroflexin-2 of Mus musculus (Mouse).